A 430-amino-acid polypeptide reads, in one-letter code: Hydrogenobyrinate a,c-diamide synthase (430 aa).

One can recognise a GATase cobBQ-type domain in the interval 239-422 (RIGVARDAAF…IHFYLPSDPL (184 aa)). The active-site Nucleophile is C321.

It belongs to the CobB/CbiA family. Requires Mg(2+) as cofactor.

The catalysed reaction is hydrogenobyrinate + 2 L-glutamine + 2 ATP + 2 H2O = hydrogenobyrinate a,c-diamide + 2 L-glutamate + 2 ADP + 2 phosphate + 2 H(+). Its pathway is cofactor biosynthesis; adenosylcobalamin biosynthesis; cob(II)yrinate a,c-diamide from precorrin-2 (aerobic route): step 9/10. Functionally, catalyzes the ATP-dependent amidation of the two carboxylate groups at positions a and c of hydrogenobyrinate, using either L-glutamine or ammonia as the nitrogen source. This is Hydrogenobyrinate a,c-diamide synthase from Stutzerimonas stutzeri (strain A1501) (Pseudomonas stutzeri).